A 526-amino-acid chain; its full sequence is Cytochrome P450 4F5 (526 aa).

Cys-470 is a heme binding site.

This sequence belongs to the cytochrome P450 family. It depends on heme as a cofactor. As to expression, high expression in liver and kidney. Lower expression in brain.

It localises to the endoplasmic reticulum membrane. Its subcellular location is the microsome membrane. The enzyme catalyses an organic molecule + reduced [NADPH--hemoprotein reductase] + O2 = an alcohol + oxidized [NADPH--hemoprotein reductase] + H2O + H(+). The protein is Cytochrome P450 4F5 (Cyp4f5) of Rattus norvegicus (Rat).